The sequence spans 303 residues: Protein bottleneck (303 aa).

Disordered stretches follow at residues 102-142 and 185-272; these read SKRN…PTVT and VATT…ASVR. Composition is skewed to low complexity over residues 115 to 138 and 185 to 197; these read RQQEQRQPQEQPLQQEELQHQQQE and VATTTANSSTANS. The segment covering 260 to 272 has biased composition (polar residues); sequence ATISRQSSSASVR.

Restricted to the blastoderm.

The protein resides in the cytoplasm. It localises to the cytoskeleton. In terms of biological role, acts as a regulator of the microfilament network governing cellularization of the embryo. Determines the timing of a key conformational transition in the cortical microfilament network: the proper coordination of membrane invagination and basal closure of the cells. To do this, bnk possibly physically links neighboring contractile units of the early cycle 14 microfilament network in a manner that prevents basal constriction until the proper stage has been reached. Bnk together with nullo and Sry-alpha may provide auxiliary functions, by acting both to stabilize a large and dynamic microfilament structure and regulate its functions. In Drosophila melanogaster (Fruit fly), this protein is Protein bottleneck (bnk).